Here is a 159-residue protein sequence, read N- to C-terminus: Siroheme decarboxylase beta subunit (159 aa).

152–157 (KTSMTY) serves as a coordination point for substrate.

The protein belongs to the Ahb/Nir family. Forms a heterodimer composed of AhbA and AhbB.

It catalyses the reaction siroheme + 2 H(+) = 12,18-didecarboxysiroheme + 2 CO2. Its pathway is porphyrin-containing compound metabolism; protoheme biosynthesis. Its function is as follows. Involved in siroheme-dependent heme b biosynthesis. Catalyzes the decarboxylation of siroheme into didecarboxysiroheme. Siroheme is decarboxylated to monodecarboxysiroheme, which is in turn decarboxylated to didecarboxysiroheme. The polypeptide is Siroheme decarboxylase beta subunit (Desulfovibrio desulfuricans (strain ATCC 27774 / DSM 6949 / MB)).